The sequence spans 579 residues: Arginine--tRNA ligase (579 aa).

The 'HIGH' region signature appears at 123–133 (PNLAKEMHVGH).

The protein belongs to the class-I aminoacyl-tRNA synthetase family. Monomer.

It is found in the cytoplasm. It carries out the reaction tRNA(Arg) + L-arginine + ATP = L-arginyl-tRNA(Arg) + AMP + diphosphate. The chain is Arginine--tRNA ligase from Saccharophagus degradans (strain 2-40 / ATCC 43961 / DSM 17024).